Consider the following 222-residue polypeptide: 3-dehydroquinate dehydratase (222 aa).

Residues 32–34 (ELR) and Arg64 contribute to the 3-dehydroquinate site. Catalysis depends on His117, which acts as the Proton donor/acceptor. The active-site Schiff-base intermediate with substrate is Lys143. Arg181 serves as a coordination point for 3-dehydroquinate.

This sequence belongs to the type-I 3-dehydroquinase family. As to quaternary structure, homodimer.

It carries out the reaction 3-dehydroquinate = 3-dehydroshikimate + H2O. It functions in the pathway metabolic intermediate biosynthesis; chorismate biosynthesis; chorismate from D-erythrose 4-phosphate and phosphoenolpyruvate: step 3/7. Functionally, involved in the third step of the chorismate pathway, which leads to the biosynthesis of aromatic amino acids. Catalyzes the cis-dehydration of 3-dehydroquinate (DHQ) and introduces the first double bond of the aromatic ring to yield 3-dehydroshikimate. This chain is 3-dehydroquinate dehydratase, found in Aeropyrum pernix (strain ATCC 700893 / DSM 11879 / JCM 9820 / NBRC 100138 / K1).